The sequence spans 196 residues: Imidazoleglycerol-phosphate dehydratase (196 aa).

It belongs to the imidazoleglycerol-phosphate dehydratase family.

It is found in the cytoplasm. The enzyme catalyses D-erythro-1-(imidazol-4-yl)glycerol 3-phosphate = 3-(imidazol-4-yl)-2-oxopropyl phosphate + H2O. The protein operates within amino-acid biosynthesis; L-histidine biosynthesis; L-histidine from 5-phospho-alpha-D-ribose 1-diphosphate: step 6/9. This is Imidazoleglycerol-phosphate dehydratase from Clostridium botulinum (strain Kyoto / Type A2).